The primary structure comprises 224 residues: Large ribosomal subunit protein uL1m (224 aa).

It belongs to the universal ribosomal protein uL1 family.

Its subcellular location is the mitochondrion. In Reclinomonas americana, this protein is Large ribosomal subunit protein uL1m (RPL1).